The following is an 880-amino-acid chain: MKQLTGAQIRQMFLDFFQEKGHAVEPSASLVPHEDPSLLWINSGVATLKKYFDGRVIPQNPRITNAQKSIRTNDIENVGKTARHHTFFEMLGNFSIGDYFKEEAITWAWEFLTSDKWIGFDKELLSVTIHPEDEEAFTIWNEKMGVPKERIIRLEENFWDIGEGPSGPNTEIFYDRGEAYGNDFSDPELYPGGENERYLEVWNLVFSQFNHNPDGSYTPLPKKNIDTGMGLERMTSIVQDVPTNFDTDLFMPMIGATETISGEKYRNGDLEKDMAFKVIADHIRTVTFAVGDGALPSNEGRGYVLRRLLRRAVRYSKKLNINRPFMFELVPVVGEVMKDFYPEVLEKKDFIAKVVKNEEERFHETLHDGEAILAEVIAKAKEEKTTVISGVDAFRLYDTYGFPIELTEEYAEEAGMTVDHEGFENEMEKQRERARAARQDVDSMQVQGGVLGEVKVASEFVGYGTVATESNVVALVKNGEYTDSLQVGEEGQLMLDVTPFYAESGGQIADRGYLLADGVKVLVKDVQKAPNGQNLHQVVVEEGTLTKDAAVKAIIDTKNRSSVVKNHTATHLLHQALKDVLGTHVNQAGSLVTSERLRFDFSHFGQVQADELEKIERIVNEKIWESIDVEISQKAIEEAKEMGAMALFGEKYGDVVRVVQVGDYSLELCGGCHVDNTASIGIFKIVAESGIGAGTRRIEAVTGKSAYELMNDQVGLLKEAAGKMKTNPKDILTRVDGLFAEVKQLQKENESLAAKLSNIEAGNLTDSVMTVDGVNVLAAKVNVADMNNLRTMMDDLKNKLESAVVVLASVNDDKVNILAGVTKDLISQGYHAGKLVKEVASRCGGGGGGRPDMAQAGGKNPAQVEEALAFVQEYVKSVSK.

Zn(2+) is bound by residues His-567, His-571, Cys-669, and His-673.

Belongs to the class-II aminoacyl-tRNA synthetase family. Zn(2+) is required as a cofactor.

The protein localises to the cytoplasm. It catalyses the reaction tRNA(Ala) + L-alanine + ATP = L-alanyl-tRNA(Ala) + AMP + diphosphate. Its function is as follows. Catalyzes the attachment of alanine to tRNA(Ala) in a two-step reaction: alanine is first activated by ATP to form Ala-AMP and then transferred to the acceptor end of tRNA(Ala). Also edits incorrectly charged Ser-tRNA(Ala) and Gly-tRNA(Ala) via its editing domain. The chain is Alanine--tRNA ligase from Bacillus thuringiensis (strain Al Hakam).